The sequence spans 434 residues: Nicotinate phosphoribosyltransferase (434 aa).

His242 is subject to Phosphohistidine; by autocatalysis.

Belongs to the NAPRTase family. Transiently phosphorylated on a His residue during the reaction cycle. Phosphorylation strongly increases the affinity for substrates and increases the rate of nicotinate D-ribonucleotide production. Dephosphorylation regenerates the low-affinity form of the enzyme, leading to product release.

It carries out the reaction nicotinate + 5-phospho-alpha-D-ribose 1-diphosphate + ATP + H2O = nicotinate beta-D-ribonucleotide + ADP + phosphate + diphosphate. It participates in cofactor biosynthesis; NAD(+) biosynthesis; nicotinate D-ribonucleotide from nicotinate: step 1/1. Catalyzes the synthesis of beta-nicotinate D-ribonucleotide from nicotinate and 5-phospho-D-ribose 1-phosphate at the expense of ATP. The protein is Nicotinate phosphoribosyltransferase of Brucella abortus (strain S19).